The primary structure comprises 230 residues: Large ribosomal subunit protein uL1 (230 aa).

The protein belongs to the universal ribosomal protein uL1 family. In terms of assembly, part of the 50S ribosomal subunit.

Functionally, binds directly to 23S rRNA. The L1 stalk is quite mobile in the ribosome, and is involved in E site tRNA release. Protein L1 is also a translational repressor protein, it controls the translation of the L11 operon by binding to its mRNA. The protein is Large ribosomal subunit protein uL1 of Desulforapulum autotrophicum (strain ATCC 43914 / DSM 3382 / VKM B-1955 / HRM2) (Desulfobacterium autotrophicum).